A 411-amino-acid chain; its full sequence is G2/mitotic-specific cyclin cig2 (411 aa).

The Destruction box signature appears at 51–60 (RTVLSDVSNV). Residues 57–89 (VSNVGKNNADEKDTKKAKRSFDESNLSTNEEAD) are disordered. Over residues 64-78 (NADEKDTKKAKRSFD) the composition is skewed to basic and acidic residues. Residues 139-265 (EIFEYIRKLD…MLNVLNFDLS (127 aa)) form the Cyclin N-terminal domain. Residues 181–273 (SNFCLMPETL…LSYPSPLNFL (93 aa)) are interaction with pop1.

The protein belongs to the cyclin family. Cyclin AB subfamily. In terms of assembly, associates with cdc2, res2 and rum1. Interacts with pop1 only when phosphorylated. Post-translationally, phosphorylated.

It localises to the nucleus. It is found in the cytoplasm. Its subcellular location is the cytoskeleton. The protein localises to the microtubule organizing center. The protein resides in the spindle pole body. In terms of biological role, essential for the control of the cell cycle at the G2/M and G1/S (mitosis) transition. Interacts with the cdc2 protein kinase to form MPF. Interaction with res2 promotes the phosphorylation of res1 and inhibits MBF-dependent gene transcription. Forms an autoregulating feedback-inhibition loop with MBF which is important for normal regulation of the cell cycle. G2/M cyclins accumulate steadily during G2 and are abruptly destroyed at mitosis. Negatively regulates conjugation via interacting with cell cycle 'start' genes. Degraded by skp1, pop1 and pop2 in the G2 and M phases of the cell cycle. This Schizosaccharomyces pombe (strain 972 / ATCC 24843) (Fission yeast) protein is G2/mitotic-specific cyclin cig2 (cig2).